The following is a 1050-amino-acid chain: MVFSMWTRKRQILIFLNMLLVSRVFGFRWFPKTLPCEVKVNIPEAHVIVDCTDKHLTEIPEGIPTNTTNLTLTINHIPSISPDSFRRLNHLEEIDLRCNCVPVLLGSKANVCTKRLQIRPGSFSGLSDLKALYLDGNQLLEIPQDLPSSLHLLSLEANNIFSITKENLTELVNIETLYLGQNCYYRNPCNVSYSIEKDAFLVMRNLKVLSLKDNNVTAVPTTLPPNLLELYLYNNIIKKIQENDFNNLNELQVLDLSGNCPRCYNVPYPCTPCENNSPLQIHDNAFNSLTELKVLRLHSNSLQHVPPTWFKNMRNLQELDLSQNYLAREIEEAKFLHFLPNLVELDFSFNYELQVYHASITLPHSLSSLENLKILRVKGYVFKELKNSSLSVLHKLPRLEVLDLGTNFIKIADLNIFKHFENLKLIDLSVNKISPSEESREVGFCPNAQTSVDRHGPQVLEALHYFRYDEYARSCRFKNKEPPSFLPLNADCHIYGQTLDLSRNNIFFIKPSDFQHLSFLKCLNLSGNTIGQTLNGSELWPLRELRYLDFSNNRLDLLYSTAFEELQSLEVLDLSSNSHYFQAEGITHMLNFTKKLRLLDKLMMNDNDISTSASRTMESDSLRILEFRGNHLDVLWRAGDNRYLDFFKNLFNLEVLDISRNSLNSLPPEVFEGMPPNLKNLSLAKNGLKSFFWDRLQLLKHLEILDLSHNQLTKVPERLANCSKSLTTLILKHNQIRQLTKYFLEDALQLRYLDISSNKIQVIQKTSFPENVLNNLEMLVLHHNRFLCNCDAVWFVWWVNHTDVTIPYLATDVTCVGPGAHKGQSVISLDLYTCELDLTNLILFSVSISSVLFLMVVMTTSHLFFWDMWYIYYFWKAKIKGYQHLQSMESCYDAFIVYDTKNSAVTEWVLQELVAKLEDPREKHFNLCLEERDWLPGQPVLENLSQSIQLSKKTVFVMTQKYAKTESFKMAFYLSHQRLLDEKVDVIILIFLEKPLQKSKFLQLRKRLCRSSVLEWPANPQAHPYFWQCLKNALTTDNHVAYSQMFKETV.

The signal sequence occupies residues 1–26 (MVFSMWTRKRQILIFLNMLLVSRVFG). Over 27–837 (FRWFPKTLPC…SLDLYTCELD (811 aa)) the chain is Extracellular. 20 LRR repeats span residues 42 to 64 (IPEAHVIVDCTDKHLTEIPEGIP), 65 to 87 (TNTTNLTLTINHIPSISPDSFRR), 89 to 111 (NHLEEIDLRCNCVPVLLGSKANV), 126 to 149 (LSDLKALYLDGNQLLEIPQDLPSS), 151 to 170 (HLLSLEANNIFSITKENLTE), 171 to 195 (LVNIETLYLGQNCYYRNPCNVSYSI), 203 to 226 (MRNLKVLSLKDNNVTAVPTTLPPN), 228 to 247 (LELYLYNNIIKKIQENDFNN), 248 to 273 (LNELQVLDLSGNCPRCYNVPYPCTPC), 275 to 289 (NNSPLQIHDNAFNSL), 290 to 312 (TELKVLRLHSNSLQHVPPTWFKN), 314 to 337 (RNLQELDLSQNYLAREIEEAKFLH), 339 to 364 (LPNLVELDFSFNYELQVYHASITLPH), 369 to 392 (LENLKILRVKGYVFKELKNSSLSV), 396 to 419 (LPRLEVLDLGTNFIKIADLNIFKH), 421 to 443 (ENLKLIDLSVNKISPSEESREVG), 493 to 516 (HIYGQTLDLSRNNIFFIKPSDFQH), 517 to 542 (LSFLKCLNLSGNTIGQTLNGSELWPL), 543 to 565 (RELRYLDFSNNRLDLLYSTAFEE), and 567 to 589 (QSLEVLDLSSNSHYFQAEGITHM). 2 N-linked (GlcNAc...) asparagine glycosylation sites follow: Asn66 and Asn69. Residues Asn167, Asn190, and Asn215 are each glycosylated (N-linked (GlcNAc...) asparagine). A glycan (N-linked (GlcNAc...) asparagine) is linked at Asn387. Residues Asn524 and Asn535 are each glycosylated (N-linked (GlcNAc...) asparagine). Asn591 carries an N-linked (GlcNAc...) asparagine glycan. LRR repeat units follow at residues 596–619 (LRLLDKLMMNDNDISTSASRTMES), 620–645 (DSLRILEFRGNHLDVLWRAGDNRYLD), 650–673 (LFNLEVLDISRNSLNSLPPEVFEG), 675–698 (PPNLKNLSLAKNGLKSFFWDRLQL), 699–722 (LKHLEILDLSHNQLTKVPERLANC), 724–746 (KSLTTLILKHNQIRQLTKYFLED), 747–770 (ALQLRYLDISSNKIQVIQKTSFPE), and 773–796 (LNNLEMLVLHHNRFLCNCDAVWFV). 2 N-linked (GlcNAc...) asparagine glycosylation sites follow: Asn680 and Asn721. N-linked (GlcNAc...) asparagine glycosylation occurs at Asn800. The chain crosses the membrane as a helical span at residues 838-858 (LTNLILFSVSISSVLFLMVVM). At 859-1050 (TTSHLFFWDM…AYSQMFKETV (192 aa)) the chain is on the cytoplasmic side. In terms of domain architecture, TIR spans 890–1034 (SCYDAFIVYD…YFWQCLKNAL (145 aa)).

This sequence belongs to the Toll-like receptor family. Homodimer. Interacts with MYD88 via their respective TIR domains. Interacts with UNC93B1. Interacts with SMPDL3B. In terms of processing, the first cleavage is performed by asparagine endopeptidase or cathepsin family members. This initial cleavage event is followed by a trimming event that is solely cathepsin mediated and required for optimal receptor signaling.

It localises to the endosome membrane. The protein localises to the endoplasmic reticulum membrane. Its subcellular location is the lysosome. It is found in the cytoplasmic vesicle. The protein resides in the phagosome. Its activity is regulated as follows. Activated by guanosine analogs including deoxyguanosine, 7-thia-8-oxoguanosine or 7-deazaguanosine in a RNA-independent manner. Functionally, endosomal receptor that plays a key role in innate and adaptive immunity. Controls host immune response against pathogens through recognition of uridine-containing single strand RNAs (ssRNAs) of viral origin or guanosine analogs. Upon binding to agonists, undergoes dimerization that brings TIR domains from the two molecules into direct contact, leading to the recruitment of TIR-containing downstream adapter MYD88 through homotypic interaction. In turn, the Myddosome signaling complex is formed involving IRAK4, IRAK1, TRAF6, TRAF3 leading to activation of downstream transcription factors NF-kappa-B and IRF7 to induce pro-inflammatory cytokines and interferons, respectively. In plasmacytoid dendritic cells, RNASET2 endonuclease cooperates with PLD3 or PLD4 5'-&gt;3' exonucleases to process RNA and release 2',3'-cyclic guanosine monophosphate (2',3'-cGMP) and cytidine-rich RNA fragments that occupy TLR7 ligand-binding pockets and trigger a signaling-competent state. This Mus musculus (Mouse) protein is Toll-like receptor 7 (Tlr7).